A 211-amino-acid polypeptide reads, in one-letter code: Holliday junction resolvase RecU (211 aa).

Residues Thr95, Asp97, Glu110, and Gln129 each contribute to the Mg(2+) site.

This sequence belongs to the RecU family. Mg(2+) serves as cofactor.

It localises to the cytoplasm. It carries out the reaction Endonucleolytic cleavage at a junction such as a reciprocal single-stranded crossover between two homologous DNA duplexes (Holliday junction).. Its function is as follows. Endonuclease that resolves Holliday junction intermediates in genetic recombination. Cleaves mobile four-strand junctions by introducing symmetrical nicks in paired strands. Promotes annealing of linear ssDNA with homologous dsDNA. Required for DNA repair, homologous recombination and chromosome segregation. The sequence is that of Holliday junction resolvase RecU from Lactobacillus acidophilus (strain ATCC 700396 / NCK56 / N2 / NCFM).